A 1196-amino-acid chain; its full sequence is Tubulin-specific chaperone D (1196 aa).

HEAT repeat units follow at residues 363-401 (VIEQ…ADDV), 599-634 (YIAM…TYAL), 752-788 (SSIA…PGFL), and 1106-1142 (GDVR…VLTY).

This sequence belongs to the TBCD family. Found in a complex with at least ARL2, PPP2CB, PPP2R1A, PPP2R2A, PPP2R5E and TBCD. Interacts with PPP2CB. Part of a supercomplex made of cofactors A to E. Cofactors A and D function by capturing and stabilizing tubulin in a quasi-native conformation. Cofactor E binds to the cofactor D-tubulin complex; interaction with cofactor C then causes the release of tubulin polypeptides that are committed to the native state. Interacts with ARL2; interaction is enhanced with the GDP-bound form of ARL2. Does not interact with ARL3, ARL4A and ARL4D. Interacts with beta tubulin. Interacts with TBCE.

The protein resides in the cell junction. Its subcellular location is the tight junction. It localises to the lateral cell membrane. The protein localises to the cytoplasm. It is found in the adherens junction. The protein resides in the cytoskeleton. Its subcellular location is the microtubule organizing center. It localises to the centrosome. In terms of biological role, tubulin-folding protein implicated in the first step of the tubulin folding pathway and required for tubulin complex assembly. Involved in the regulation of microtubule polymerization or depolymerization, it modulates microtubule dynamics by capturing GTP-bound beta-tubulin (TUBB). Its ability to interact with beta tubulin is regulated via its interaction with ARL2. Acts as a GTPase-activating protein (GAP) for ARL2. Induces microtubule disruption in absence of ARL2. Increases degradation of beta tubulin, when overexpressed in polarized cells. Promotes epithelial cell detachment, a process antagonized by ARL2. Induces tight adherens and tight junctions disassembly at the lateral cell membrane. Required for correct assembly and maintenance of the mitotic spindle, and proper progression of mitosis. Involved in neuron morphogenesis. This Mus musculus (Mouse) protein is Tubulin-specific chaperone D (Tbcd).